Here is a 375-residue protein sequence, read N- to C-terminus: Alanine racemase, catabolic (375 aa).

Residue Lys38 is the Proton acceptor; specific for D-alanine of the active site. The residue at position 38 (Lys38) is an N6-(pyridoxal phosphate)lysine. Tyr269 (proton acceptor; specific for L-alanine) is an active-site residue.

It belongs to the alanine racemase family. It depends on pyridoxal 5'-phosphate as a cofactor.

The enzyme catalyses L-alanine = D-alanine. It participates in amino-acid biosynthesis; D-alanine biosynthesis; D-alanine from L-alanine: step 1/1. The protein is Alanine racemase, catabolic (alr1) of Schizosaccharomyces pombe (strain 972 / ATCC 24843) (Fission yeast).